We begin with the raw amino-acid sequence, 171 residues long: Replication restart protein PriC (171 aa).

This sequence belongs to the PriC family. Monomer. Component of the replication restart primosome, which is composed of PriA, PriB, PriC, DnaBe and DnaT; DnaG primase associates transiently with this complex. Interacts with the C-terminus of SSB. SSB interaction is required to load the main replicative helicase onto substrate replication forks. Interacts with helicase DnaB alone and in the DnaB-DnaC complex, probably 1:1 binding with DnaB.

In terms of biological role, involved in the restart of stalled replication forks, which reloads the DnaB replicative helicase on sites other than the origin of replication. In vitro can load (E.coli) DnaB replicative helicase from a DnaB-DnaC complex on a single-stranded DNA (ssDNA)-binding protein (SSB)-coated stalled replication fork with no leading- or lagging-strand in the absence of other primosome proteins (PriA, PriB or DnaT). Binds SSB (tested with E.coli protein) and ssDNA. Complements priC in an E.coli priB-priC double deletion. This is Replication restart protein PriC from Cronobacter sakazakii (strain ATCC BAA-894) (Enterobacter sakazakii).